A 113-amino-acid polypeptide reads, in one-letter code: Large ribosomal subunit protein uL22 (113 aa).

The protein belongs to the universal ribosomal protein uL22 family. Part of the 50S ribosomal subunit.

This protein binds specifically to 23S rRNA; its binding is stimulated by other ribosomal proteins, e.g. L4, L17, and L20. It is important during the early stages of 50S assembly. It makes multiple contacts with different domains of the 23S rRNA in the assembled 50S subunit and ribosome. In terms of biological role, the globular domain of the protein is located near the polypeptide exit tunnel on the outside of the subunit, while an extended beta-hairpin is found that lines the wall of the exit tunnel in the center of the 70S ribosome. In Desulforamulus reducens (strain ATCC BAA-1160 / DSM 100696 / MI-1) (Desulfotomaculum reducens), this protein is Large ribosomal subunit protein uL22.